The following is a 65-amino-acid chain: MPKIKTVRGAAKRFKKTGSGGFKRKHANLRHILTKKATKRKRHLRPKGMVSKNDMVLVVACLPYA.

The interval methionine 1–phenylalanine 22 is disordered. Residues alanine 10–phenylalanine 22 are compositionally biased toward basic residues.

This sequence belongs to the bacterial ribosomal protein bL35 family.

The polypeptide is Large ribosomal subunit protein bL35 (Serratia proteamaculans (strain 568)).